Consider the following 430-residue polypeptide: MITDLPKDLIEEILSRVSMTSMRVVRLTCKSWNTLSNSESFKKMHIGKVTSTREGESRVIMLIDYNLFLMSAVLMDDVDPSIEFKGKLSCLKEQVKISQVFHCEGLLLCILKDDTRIVVWNPYRQETRWIIPRYSHRPYVMNNIRYALGYENNKSGRSLKLLRFIDYCYTEKHICWHEIYDFDSDLWTTLDVTPHWYILSNWSCVQGVSLKGNTYWCAREENSDGYNHIICFDFTRERFGPLLPLPVNVIDNEYEYVTSSCVREGKIAALFQHNDSYPYELEIWITTKIEAEMVSWNKFLRIDIEPNNNIMVPFIYGGFFIDEEKKKVALGFDEEFGRKTFNIIGEDGYFREFDRITFNIIEEAGERAGVNCGSYVCSYVPSLVRIKKPAQGKRKRQSSLEKLRFDQNTWIFDSIYQATASQIRRRRPTR.

Residues 1–44 form the F-box domain; the sequence is MITDLPKDLIEEILSRVSMTSMRVVRLTCKSWNTLSNSESFKKM. Kelch repeat units follow at residues 161–207, 312–363, and 383–430; these read LLRF…CVQG, VPFI…IIEE, and LVRI…RPTR.

This Arabidopsis thaliana (Mouse-ear cress) protein is F-box/kelch-repeat protein At4g33290.